The sequence spans 669 residues: Methionine--tRNA ligase (669 aa).

Positions 15–25 (PYANGPAHIGH) match the 'HIGH' region motif. Positions 146, 149, 158, and 162 each coordinate Zn(2+). The 'KMSKS' region signature appears at 328 to 332 (KFSKS). Lys-331 is a binding site for ATP. A tRNA-binding domain is found at 570–669 (QFKALDLRVG…KEVPAGCGIR (100 aa)).

It belongs to the class-I aminoacyl-tRNA synthetase family. MetG type 1 subfamily. As to quaternary structure, homodimer. Zn(2+) serves as cofactor.

The protein localises to the cytoplasm. The catalysed reaction is tRNA(Met) + L-methionine + ATP = L-methionyl-tRNA(Met) + AMP + diphosphate. Its function is as follows. Is required not only for elongation of protein synthesis but also for the initiation of all mRNA translation through initiator tRNA(fMet) aminoacylation. This Methanothrix thermoacetophila (strain DSM 6194 / JCM 14653 / NBRC 101360 / PT) (Methanosaeta thermophila) protein is Methionine--tRNA ligase.